Consider the following 100-residue polypeptide: MNLSPREKDKLLVSMAAMVARRRLERGVKLNHPEAVALITDFIVEGARDGRSVAELMHAGAQVITRDQCMDGIAEMIHDIQVEATFPDGTKLVTVHQPIR.

Belongs to the urease gamma subunit family. As to quaternary structure, heterotrimer of UreA (gamma), UreB (beta) and UreC (alpha) subunits. Three heterotrimers associate to form the active enzyme.

It is found in the cytoplasm. The catalysed reaction is urea + 2 H2O + H(+) = hydrogencarbonate + 2 NH4(+). It participates in nitrogen metabolism; urea degradation; CO(2) and NH(3) from urea (urease route): step 1/1. The sequence is that of Urease subunit gamma from Rhodopseudomonas palustris (strain ATCC BAA-98 / CGA009).